A 146-amino-acid chain; its full sequence is UPF0735 ACT domain-containing protein TTE2621 (146 aa).

One can recognise an ACT domain in the interval 71-146; it reads TFSMVLEHMP…GVRKIEVLGE (76 aa).

The protein belongs to the UPF0735 family.

This is UPF0735 ACT domain-containing protein TTE2621 from Caldanaerobacter subterraneus subsp. tengcongensis (strain DSM 15242 / JCM 11007 / NBRC 100824 / MB4) (Thermoanaerobacter tengcongensis).